The chain runs to 656 residues: Chaperone protein DnaK (656 aa).

Over residues 590-605 (GGAAGGAAGGAAGGAA) the composition is skewed to gly residues. Residues 590 to 656 (GGAAGGAAGG…DGQPKPGPAA (67 aa)) form a disordered region. Residues 606–621 (GDAAGAAGDSTGDAAG) are compositionally biased toward low complexity. Residues 622 to 635 (AAGGPSEGPAGDAG) are compositionally biased toward gly residues.

This sequence belongs to the heat shock protein 70 family.

Functionally, acts as a chaperone. This Cenarchaeum symbiosum (strain A) protein is Chaperone protein DnaK.